The sequence spans 765 residues: Probable dehydratase PflD (765 aa).

The region spanning 3–637 (NRISRLKTAL…VVGATPDGRF (635 aa)) is the PFL domain. Residues 645–765 (GGLSPMLGQD…DIIRRTAHQL (121 aa)) form the Glycine radical domain. Gly741 carries the glycine radical modification.

Belongs to the glycyl radical enzyme (GRE) family.

Functionally, probably shows dehydratase activity. The sequence is that of Probable dehydratase PflD (pflD) from Escherichia coli (strain K12).